A 1362-amino-acid polypeptide reads, in one-letter code: DNA-directed RNA polymerase subunit beta (1362 aa).

Belongs to the RNA polymerase beta chain family. As to quaternary structure, the RNAP catalytic core consists of 2 alpha, 1 beta, 1 beta' and 1 omega subunit. When a sigma factor is associated with the core the holoenzyme is formed, which can initiate transcription.

The catalysed reaction is RNA(n) + a ribonucleoside 5'-triphosphate = RNA(n+1) + diphosphate. Functionally, DNA-dependent RNA polymerase catalyzes the transcription of DNA into RNA using the four ribonucleoside triphosphates as substrates. The protein is DNA-directed RNA polymerase subunit beta of Acidithiobacillus ferrooxidans (strain ATCC 23270 / DSM 14882 / CIP 104768 / NCIMB 8455) (Ferrobacillus ferrooxidans (strain ATCC 23270)).